A 167-amino-acid chain; its full sequence is MLVIHQRLPARSPRWDEELHLTYEARSKSRLRCFAASGEEVGLFLERGLPPLADGDCLEARDGRVVRVFARAEELLHVTCASPLELTRAAYHLGNRHVALQVGEGWLRLLDDYVLKAMLEQLGASVNAIQAPFQPEHGAYGGGHHHSHHGEAEFNYAPRLHQFGVRR.

It belongs to the UreE family.

Its subcellular location is the cytoplasm. Functionally, involved in urease metallocenter assembly. Binds nickel. Probably functions as a nickel donor during metallocenter assembly. This chain is Urease accessory protein UreE, found in Pseudomonas paraeruginosa (strain DSM 24068 / PA7) (Pseudomonas aeruginosa (strain PA7)).